A 191-amino-acid polypeptide reads, in one-letter code: Cytochrome c oxidase assembly protein CtaG (191 aa).

The Cytoplasmic segment spans residues 1 to 9 (MSLSPHQKT). A helical; Signal-anchor for type II membrane protein membrane pass occupies residues 10–30 (AGGLVLVVAVMGAASFAAVPF). The Periplasmic portion of the chain corresponds to 31–191 (YNWFCRVTGF…LAAESATDVN (161 aa)).

This sequence belongs to the COX11/CtaG family.

The protein resides in the cell inner membrane. In terms of biological role, exerts its effect at some terminal stage of cytochrome c oxidase synthesis, probably by being involved in the insertion of the copper B into subunit I. The sequence is that of Cytochrome c oxidase assembly protein CtaG from Cereibacter sphaeroides (strain ATCC 17029 / ATH 2.4.9) (Rhodobacter sphaeroides).